A 681-amino-acid chain; its full sequence is Auxin response factor 8 (681 aa).

A DNA-binding region (TF-B3) is located at residues 120–222; the sequence is FAKTLTQSDA…DLHVGIRRAK (103 aa). Disordered stretches follow at residues 474 to 518 and 534 to 577; these read LRRP…AKPP and SLSG…TSSE. Polar residues-rich tracts occupy residues 534-555 and 564-577; these read SLSGTTSPAATGNSSLNWNTEK and GVIQNSPTDNTSSE. The PB1 domain maps to 595–675; the sequence is PGQCKVFIES…RRLTILTDAG (81 aa).

The protein belongs to the ARF family. As to quaternary structure, homodimers and heterodimers. As to expression, expressed in roots, culms, leaves and young panicles.

The protein localises to the nucleus. Functionally, auxin response factors (ARFs) are transcriptional factors that bind specifically to the DNA sequence 5'-TGTCTC-3' found in the auxin-responsive promoter elements (AuxREs). This is Auxin response factor 8 (ARF8) from Oryza sativa subsp. japonica (Rice).